The following is a 616-amino-acid chain: Chaperone protein HscA (616 aa).

It belongs to the heat shock protein 70 family.

In terms of biological role, chaperone involved in the maturation of iron-sulfur cluster-containing proteins. Has a low intrinsic ATPase activity which is markedly stimulated by HscB. Involved in the maturation of IscU. In Pectobacterium carotovorum subsp. carotovorum (strain PC1), this protein is Chaperone protein HscA.